A 67-amino-acid chain; its full sequence is Conotoxin TsMMSK-B021 (67 aa).

Positions 1–20 are cleaved as a signal peptide; it reads MMSKLGVLLTICLLLFPLTA. A propeptide spanning residues 21-50 is cleaved from the precursor; sequence VQLDGDQPADLPELRAQDFAPERSPWFDPV. Disulfide bonds link Cys-53/Cys-65, Cys-54/Cys-61, and Cys-58/Cys-64. Pro-63 is modified (4-hydroxyproline).

The protein belongs to the conotoxin M superfamily. In terms of tissue distribution, expressed by the venom duct.

Its subcellular location is the secreted. This chain is Conotoxin TsMMSK-B021, found in Conus tessulatus (Tessellate cone).